The chain runs to 497 residues: RNA polymerase sigma factor SigA (497 aa).

2 disordered regions span residues 1-20 and 62-86; these read MSTD…PELS and KTLH…HAPL. Residues 63–73 show a composition bias toward basic and acidic residues; the sequence is TLHENKESDVP. Positions 74–84 are enriched in basic residues; the sequence is KKRRGRKPKHA. Positions 250 to 320 are sigma-70 factor domain-2; it reads LVTSNLRLVV…TRAIADQART (71 aa). An Interaction with polymerase core subunit RpoC motif is present at residues 274–277; that stretch reads DLIQ. Positions 329–410 are sigma-70 factor domain-3; sequence ETINRLAKAE…DTDAQTPDEF (82 aa). The tract at residues 423 to 478 is sigma-70 factor domain-4; the sequence is LLNNNLSEQEELIVRMRIGMPPYNEPKTLDEVGQKILIPREKIRQIENKAIRKLRH. The segment at residues 451 to 470 is a DNA-binding region (H-T-H motif); it reads LDEVGQKILIPREKIRQIEN.

It belongs to the sigma-70 factor family. RpoD/SigA subfamily. In terms of assembly, interacts transiently with the RNA polymerase catalytic core.

The protein resides in the cytoplasm. In terms of biological role, sigma factors are initiation factors that promote the attachment of RNA polymerase to specific initiation sites and are then released. This sigma factor is the primary sigma factor during exponential growth. The sequence is that of RNA polymerase sigma factor SigA from Mycoplasma genitalium (strain ATCC 33530 / DSM 19775 / NCTC 10195 / G37) (Mycoplasmoides genitalium).